Consider the following 898-residue polypeptide: Protein translocase subunit SecA (898 aa).

Residues glutamine 87, 105-109 (GEGKT), and aspartate 512 each bind ATP. Positions 855–865 (MQYQNNEGTSS) are enriched in polar residues. The tract at residues 855–898 (MQYQNNEGTSSLHEKSEHKIGRNESCPCGSGKKYKHCHGSKAKY) is disordered. The segment covering 866 to 876 (LHEKSEHKIGR) has biased composition (basic and acidic residues). 4 residues coordinate Zn(2+): cysteine 880, cysteine 882, cysteine 891, and histidine 892. The segment covering 886 to 898 (KKYKHCHGSKAKY) has biased composition (basic residues).

Belongs to the SecA family. In terms of assembly, monomer and homodimer. Part of the essential Sec protein translocation apparatus which comprises SecA, SecYEG and auxiliary proteins SecDF-YajC and YidC. The cofactor is Zn(2+).

The protein localises to the cell inner membrane. The protein resides in the cytoplasm. The enzyme catalyses ATP + H2O + cellular proteinSide 1 = ADP + phosphate + cellular proteinSide 2.. Functionally, part of the Sec protein translocase complex. Interacts with the SecYEG preprotein conducting channel. Has a central role in coupling the hydrolysis of ATP to the transfer of proteins into and across the cell membrane, serving both as a receptor for the preprotein-SecB complex and as an ATP-driven molecular motor driving the stepwise translocation of polypeptide chains across the membrane. This is Protein translocase subunit SecA from Histophilus somni (strain 2336) (Haemophilus somnus).